Consider the following 92-residue polypeptide: MKPIRVKVKVNGRVQGVGFRHFTYKTAISLELTGWVRNLEDGCVEAVAEGPRQQVEEWLAALKKGPPASKVAGLTIQREIVEGVFERFEVRF.

The Acylphosphatase-like domain occupies 5–92; the sequence is RVKVKVNGRV…GVFERFEVRF (88 aa). Active-site residues include Arg-20 and Asn-38.

This sequence belongs to the acylphosphatase family.

It catalyses the reaction an acyl phosphate + H2O = a carboxylate + phosphate + H(+). The chain is Acylphosphatase (acyP) from Syntrophotalea carbinolica (strain DSM 2380 / NBRC 103641 / GraBd1) (Pelobacter carbinolicus).